A 421-amino-acid chain; its full sequence is 4-hydroxy-3-methylbut-2-en-1-yl diphosphate synthase (flavodoxin) (421 aa).

[4Fe-4S] cluster is bound by residues Cys298, Cys301, Cys344, and Glu351.

It belongs to the IspG family. [4Fe-4S] cluster serves as cofactor.

The enzyme catalyses (2E)-4-hydroxy-3-methylbut-2-enyl diphosphate + oxidized [flavodoxin] + H2O + 2 H(+) = 2-C-methyl-D-erythritol 2,4-cyclic diphosphate + reduced [flavodoxin]. Its pathway is isoprenoid biosynthesis; isopentenyl diphosphate biosynthesis via DXP pathway; isopentenyl diphosphate from 1-deoxy-D-xylulose 5-phosphate: step 5/6. Converts 2C-methyl-D-erythritol 2,4-cyclodiphosphate (ME-2,4cPP) into 1-hydroxy-2-methyl-2-(E)-butenyl 4-diphosphate. This is 4-hydroxy-3-methylbut-2-en-1-yl diphosphate synthase (flavodoxin) from Neisseria meningitidis serogroup C (strain 053442).